Reading from the N-terminus, the 665-residue chain is Methionine--tRNA ligase (665 aa).

A 'HIGH' region motif is present at residues 12–22 (YYPSGKLHIGS). Positions 308–312 (KMSKS) match the 'KMSKS' region motif. K311 serves as a coordination point for ATP. Residues 562 to 665 (TFDAVEIRVA…PSVPNGSIIG (104 aa)) enclose the tRNA-binding domain.

It belongs to the class-I aminoacyl-tRNA synthetase family. MetG type 2B subfamily. Homodimer.

The protein localises to the cytoplasm. The enzyme catalyses tRNA(Met) + L-methionine + ATP = L-methionyl-tRNA(Met) + AMP + diphosphate. In terms of biological role, is required not only for elongation of protein synthesis but also for the initiation of all mRNA translation through initiator tRNA(fMet) aminoacylation. The chain is Methionine--tRNA ligase (metG) from Streptococcus pyogenes serotype M6 (strain ATCC BAA-946 / MGAS10394).